We begin with the raw amino-acid sequence, 212 residues long: GrpE protein homolog, mitochondrial (212 aa).

Belongs to the GrpE family. As to quaternary structure, component of the PAM complex, at least composed of mtHsp70, MGE1, TIM44, PAM16, PAM17 and PAM18.

It is found in the mitochondrion matrix. In terms of biological role, essential component of the PAM complex, a complex required for the translocation of transit peptide-containing proteins from the inner membrane into the mitochondrial matrix in an ATP-dependent manner. Seems to control the nucleotide-dependent binding of SSC1 to substrate proteins. The polypeptide is GrpE protein homolog, mitochondrial (mge1) (Eremothecium gossypii (strain ATCC 10895 / CBS 109.51 / FGSC 9923 / NRRL Y-1056) (Yeast)).